Consider the following 597-residue polypeptide: Phragmoplastin interacting protein 1 (597 aa).

A disordered region spans residues 18–136 (ESLSVSVSET…KTPKKAEEGN (119 aa)). Residues 20–29 (LSVSVSETNP) are compositionally biased toward polar residues. Residues 30–40 (QSQSLKLLLDS) show a composition bias toward low complexity. 2 stretches are compositionally biased toward basic residues: residues 43–53 (HKPRLSKREKR) and 112–129 (QKKK…NKTP). The short motif at 112–119 (QKKKNKKK) is the Nuclear localization signal element. RRM domains are found at residues 161–238 (NKLY…QYVK) and 262–338 (NRVY…CALK). 3 consecutive CCHC-type zinc fingers follow at residues 397–411 (CYEC…TACP), 481–495 (CYEC…TACP), and 576–591 (CYEC…ACPN).

As to quaternary structure, interacts with phragmoplastins (e.g. DRP1A, DRP1B, DRP1C, DRP1D and DRP1E) and with GTP-bound ARAC11/ROP1 as well as with Ran2 transcripts.

It localises to the nucleus. Its subcellular location is the cell membrane. It is found in the cytoplasm. The protein localises to the cytoskeleton. The protein resides in the phragmoplast. RNA-binding protein which mediates polarized mRNA (e.g. Ran2 transcripts mRNA) transport from the nucleus to the vicinity of the cell plate during cytokinesis and phragmoplast formation. This Arabidopsis thaliana (Mouse-ear cress) protein is Phragmoplastin interacting protein 1.